We begin with the raw amino-acid sequence, 326 residues long: Tetraketide alpha-pyrone reductase 1 (326 aa).

Residues 8–32, Lys-44, and Tyr-162 contribute to the NADP(+) site; that span reads VCVT…GYEV.

This sequence belongs to the NAD(P)-dependent epimerase/dehydratase family. Dihydroflavonol-4-reductase subfamily. As to quaternary structure, interacts with 4CLL1/ACOS5, PKSA and PKSB. In terms of tissue distribution, specifically expressed in anther tapetal cells during microspores development.

It is found in the cytoplasm. The protein resides in the nucleus. It localises to the endoplasmic reticulum. Functionally, involved in the biosynthesis of hydroxylated tetraketide compounds that serve as sporopollenin precursors (the main constituents of exine). Is essential for pollen wall development. Acts on tetraketide alpha-pyrones and reduces the carbonyl function on the tetraketide alkyl chain to a secondary alcohol function. This chain is Tetraketide alpha-pyrone reductase 1 (TKPR1), found in Arabidopsis thaliana (Mouse-ear cress).